A 131-amino-acid polypeptide reads, in one-letter code: uncharacterized protein (131 aa).

The tract at residues Asn99–Phe131 is disordered. The span at Gln102–Glu113 shows a compositional bias: acidic residues. The segment covering Lys114–Phe131 has biased composition (basic and acidic residues).

This is an uncharacterized protein from Sulfolobus islandicus rod-shaped virus 1 (SIRV-1).